The chain runs to 343 residues: GTPase Obg (343 aa).

The 159-residue stretch at 1 to 159 (MKFLDQAKIY…RWVWLRLKLI (159 aa)) folds into the Obg domain. The 169-residue stretch at 160 to 328 (ADAGLVGLPN…LLRQVMTYVA (169 aa)) folds into the OBG-type G domain. GTP contacts are provided by residues 166–173 (GLPNAGKS), 191–195 (FTTLH), 213–216 (DIPG), 280–283 (NKCD), and 309–311 (SGV). Positions 173 and 193 each coordinate Mg(2+).

The protein belongs to the TRAFAC class OBG-HflX-like GTPase superfamily. OBG GTPase family. Monomer. Mg(2+) serves as cofactor.

Its subcellular location is the cytoplasm. An essential GTPase which binds GTP, GDP and possibly (p)ppGpp with moderate affinity, with high nucleotide exchange rates and a fairly low GTP hydrolysis rate. Plays a role in control of the cell cycle, stress response, ribosome biogenesis and in those bacteria that undergo differentiation, in morphogenesis control. The polypeptide is GTPase Obg (Granulibacter bethesdensis (strain ATCC BAA-1260 / CGDNIH1)).